The chain runs to 152 residues: Protein NrdI (152 aa).

It belongs to the NrdI family.

In terms of biological role, probably involved in ribonucleotide reductase function. The polypeptide is Protein NrdI (Rhodococcus opacus (strain B4)).